A 206-amino-acid chain; its full sequence is Small ribosomal subunit protein uS4 (206 aa).

An S4 RNA-binding domain is found at 96-156 (RRLDNVVYRM…EKSKNQLRIK (61 aa)).

It belongs to the universal ribosomal protein uS4 family. In terms of assembly, part of the 30S ribosomal subunit. Contacts protein S5. The interaction surface between S4 and S5 is involved in control of translational fidelity.

Functionally, one of the primary rRNA binding proteins, it binds directly to 16S rRNA where it nucleates assembly of the body of the 30S subunit. Its function is as follows. With S5 and S12 plays an important role in translational accuracy. This is Small ribosomal subunit protein uS4 from Hahella chejuensis (strain KCTC 2396).